The primary structure comprises 565 residues: Periplasmic trehalase (565 aa).

The signal sequence occupies residues 1-30 (MKSPTPSRPQKMALIPACIFLCFAALSVQA). Substrate-binding positions include arginine 152, 159-160 (WD), asparagine 196, 205-207 (RSQ), 277-279 (RPE), and glycine 310. Catalysis depends on proton donor/acceptor residues aspartate 312 and glutamate 496. Glutamate 511 provides a ligand contact to substrate. Residues 539–565 (CDNVPATRPLSESTTQPLKQKEAEPTP) form a disordered region.

The protein belongs to the glycosyl hydrolase 37 family. As to quaternary structure, monomer.

The protein resides in the periplasm. It catalyses the reaction alpha,alpha-trehalose + H2O = alpha-D-glucose + beta-D-glucose. Provides the cells with the ability to utilize trehalose at high osmolarity by splitting it into glucose molecules that can subsequently be taken up by the phosphotransferase-mediated uptake system. This is Periplasmic trehalase from Escherichia coli (strain SMS-3-5 / SECEC).